Consider the following 134-residue polypeptide: Beta-synuclein (134 aa).

2 repeat units span residues 20–30 (EKTKQGVTEAA) and 31–41 (EKTKEGVLYVG). The segment at 20–67 (EKTKQGVTEAAEKTKEGVLYVGSKTKEGVVQGVASVAEKTKEQASHLG) is 4 X 11 AA tandem repeats of [EGS]-K-T-K-[EQ]-[GQ]-V-X(4). A 3; approximate repeat occupies 42–56 (SKTKEGVVQGVASVA). Repeat unit 4 spans residues 57–67 (EKTKEQASHLG). The segment at 97-134 (EVAQEAAEEPLIEPLMEPEGESYEEQPQEEYQEYEPEA) is disordered. Residues 98 to 134 (VAQEAAEEPLIEPLMEPEGESYEEQPQEEYQEYEPEA) show a composition bias toward acidic residues. Residue Ser118 is modified to Phosphoserine; by BARK1, CK2 and GRK5.

This sequence belongs to the synuclein family. Post-translationally, phosphorylated. Phosphorylation by G-protein coupled receptor kinases (GRK) is more efficient than phosphorylation by CK1, CK2 and CaM-kinase II. Specifically present in synapses around neurons but not in glial cells.

Its subcellular location is the cytoplasm. May be involved in neuronal plasticity. This is Beta-synuclein (SNCB) from Bos taurus (Bovine).